Consider the following 295-residue polypeptide: MLKLSRSANLRLVQLPAARLSGNGAKLLTQRGFFTVTRLWQSNGKKPLSRVPVGGTPIKDNGKVREGSIEFSTGKAIALFLAVGGALSYFFNREKRRLETQKEAEANRGYGKPSLGGPFHLEDMYGNEFTEKNLLGKFSIIYFGFSNCPDICPDELDKLGLWLNTLSSKYGITLQPLFITCDPARDSPAVLKEYLSDFHPSILGLTGTFDEVKNACKKYRVYFSTPPNVKPGQDYLVDHSIFFYLMDPEGQFVDALGRNYDEKTGVDKIVEHVKSYVPAEQRAKQKEAWYSFLFK.

The helical transmembrane segment at 76–92 threads the bilayer; sequence AIALFLAVGGALSYFFN. Cu cation contacts are provided by C148, C152, and H239.

The protein belongs to the SCO1/2 family.

The protein resides in the mitochondrion inner membrane. Required for the accumulation of subunits 1 and 2 of cytochrome c oxidase complex. Thought to play a role in either mitochondrial copper transport or insertion of copper into the active site of COX. This is Protein SCO1, mitochondrial (SCO1) from Saccharomyces cerevisiae (strain ATCC 204508 / S288c) (Baker's yeast).